The following is a 240-amino-acid chain: Orotidine 5'-phosphate decarboxylase (240 aa).

Substrate-binding positions include Asp-15, Lys-37, 64 to 73 (DLKYHDIPNT), Thr-127, Arg-188, Gln-197, Gly-217, and Arg-218. The active-site Proton donor is Lys-66.

This sequence belongs to the OMP decarboxylase family. Type 1 subfamily. Homodimer.

It carries out the reaction orotidine 5'-phosphate + H(+) = UMP + CO2. The protein operates within pyrimidine metabolism; UMP biosynthesis via de novo pathway; UMP from orotate: step 2/2. Catalyzes the decarboxylation of orotidine 5'-monophosphate (OMP) to uridine 5'-monophosphate (UMP). This Citrifermentans bemidjiense (strain ATCC BAA-1014 / DSM 16622 / JCM 12645 / Bem) (Geobacter bemidjiensis) protein is Orotidine 5'-phosphate decarboxylase.